A 131-amino-acid chain; its full sequence is Small ribosomal subunit protein uS19 (131 aa).

It belongs to the universal ribosomal protein uS19 family.

Protein S19 forms a complex with S13 that binds strongly to the 16S ribosomal RNA. The protein is Small ribosomal subunit protein uS19 of Nitrosopumilus maritimus (strain SCM1).